The primary structure comprises 396 residues: Elongation factor Tu (396 aa).

A tr-type G domain is found at 10–206; it reads KPHVNIGTIG…AVDESVPDPV (197 aa). Residues 19–26 form a G1 region; the sequence is GHVDHGKT. 19 to 26 contacts GTP; sequence GHVDHGKT. Threonine 26 provides a ligand contact to Mg(2+). The segment at 62-66 is G2; that stretch reads GITIN. Residues 83-86 are G3; the sequence is DAPG. Residues 83–87 and 138–141 each bind GTP; these read DAPGH and NKSD. Residues 138 to 141 form a G4 region; sequence NKSD. The interval 176–178 is G5; that stretch reads SGL.

It belongs to the TRAFAC class translation factor GTPase superfamily. Classic translation factor GTPase family. EF-Tu/EF-1A subfamily. Monomer.

The protein resides in the cytoplasm. It catalyses the reaction GTP + H2O = GDP + phosphate + H(+). Its function is as follows. GTP hydrolase that promotes the GTP-dependent binding of aminoacyl-tRNA to the A-site of ribosomes during protein biosynthesis. The chain is Elongation factor Tu from Pseudarthrobacter chlorophenolicus (strain ATCC 700700 / DSM 12829 / CIP 107037 / JCM 12360 / KCTC 9906 / NCIMB 13794 / A6) (Arthrobacter chlorophenolicus).